The primary structure comprises 110 residues: Protein RnfH (110 aa).

The tract at residues 86–110 (RKRAAQQAKDQEEKKKAEKSANKEN) is disordered. The span at 94 to 110 (KDQEEKKKAEKSANKEN) shows a compositional bias: basic and acidic residues.

This sequence belongs to the UPF0125 (RnfH) family.

In Mannheimia succiniciproducens (strain KCTC 0769BP / MBEL55E), this protein is Protein RnfH.